Consider the following 258-residue polypeptide: Imidazole glycerol phosphate synthase subunit HisF (258 aa).

Catalysis depends on residues aspartate 11 and aspartate 130.

This sequence belongs to the HisA/HisF family. Heterodimer of HisH and HisF.

Its subcellular location is the cytoplasm. The catalysed reaction is 5-[(5-phospho-1-deoxy-D-ribulos-1-ylimino)methylamino]-1-(5-phospho-beta-D-ribosyl)imidazole-4-carboxamide + L-glutamine = D-erythro-1-(imidazol-4-yl)glycerol 3-phosphate + 5-amino-1-(5-phospho-beta-D-ribosyl)imidazole-4-carboxamide + L-glutamate + H(+). It participates in amino-acid biosynthesis; L-histidine biosynthesis; L-histidine from 5-phospho-alpha-D-ribose 1-diphosphate: step 5/9. IGPS catalyzes the conversion of PRFAR and glutamine to IGP, AICAR and glutamate. The HisF subunit catalyzes the cyclization activity that produces IGP and AICAR from PRFAR using the ammonia provided by the HisH subunit. The polypeptide is Imidazole glycerol phosphate synthase subunit HisF (Gluconacetobacter diazotrophicus (strain ATCC 49037 / DSM 5601 / CCUG 37298 / CIP 103539 / LMG 7603 / PAl5)).